A 2053-amino-acid chain; its full sequence is Nonribosomal peptide synthetase pboA (2053 aa).

The interval 16–402 is adenylation 1; the sequence is ACRDNADRPA…GRRDRVAKVR (387 aa). In terms of domain architecture, Carrier 1 spans 503–579; that stretch reads RSYASVDEVI…HLITVCRERR (77 aa). At S540 the chain carries O-(pantetheine 4'-phosphoryl)serine. The segment at 611–896 is condensation 1; that stretch reads NDPSLYCVKH…LLQSVHRTVQ (286 aa). The tract at residues 1034–1418 is adenylation 2; sequence SAAARNPTNI…GRRDRQVKLR (385 aa). One can recognise a Carrier 2 domain in the interval 1515 to 1593; the sequence is VPDTSVKKII…DIVALVEGKI (79 aa). S1553 is subject to O-(pantetheine 4'-phosphoryl)serine. Positions 1630–1981 are condensation 2; the sequence is NSQCQSGFNV…LQLRLEYDSD (352 aa).

This sequence belongs to the NRP synthetase family. The cofactor is pantetheine 4'-phosphate.

It functions in the pathway secondary metabolite biosynthesis. Nonribosomal peptide synthetase; part of the gene cluster that mediates the biosynthesis of protubonine B, a hydroxylated and diacetylated cyclo-L-Trp-L-Leu derivative. The first step of the protubonine B synthesis is performed by the nonribosomal peptide synthetase pboA that catalyzes the formation of cyclo-L-Trp-L-Leu by condensing L-Leu with L-Trp. The flavin-dependent monooxygenase pboD is responsible for hydroxylation at C-3 of the indole ring and subsequent formation of the pyrrolidine ring, leadind to protubonine D. Protubonine D is further diacetylated by two acetyltransferases, pboB and pboC, to form the final product protubonine B via protubonine C. The chain is Nonribosomal peptide synthetase pboA from Aspergillus ustus.